Here is a 390-residue protein sequence, read N- to C-terminus: 5-hydroxytryptamine receptor 1B (390 aa).

Residues 1–46 lie on the Extracellular side of the membrane; the sequence is MEEPGAQCAPPLAAGSQIAVPQANLSAAHSHNCSAEGYIYQDSIAL. Asn24 and Asn32 each carry an N-linked (GlcNAc...) asparagine glycan. Residues 47 to 72 form a helical membrane-spanning segment; that stretch reads PWKVLLVLLLALFTLATTLSNAFVVA. The Cytoplasmic portion of the chain corresponds to 73–86; that stretch reads TVYRTRKLHTPANY. A helical membrane pass occupies residues 87-111; sequence LIASLAVTDLLVSILVMPISTMYTV. The Extracellular segment spans residues 112-119; that stretch reads TGRWTLGQ. The chain crosses the membrane as a helical span at residues 120–145; the sequence is VVCDLWLSSDITCCTASIMHLCVIAL. Cysteines 122 and 199 form a disulfide. Ergotamine-binding residues include Asp129 and Thr134. Residues 146-148 carry the DRY motif; important for ligand-induced conformation changes and signaling motif; sequence DRY. Topologically, residues 146–165 are cytoplasmic; that stretch reads DRYWAITDAVEYSAKRTPKR. Residues 166–184 traverse the membrane as a helical segment; the sequence is AAIMIRLVWVFSICISLPP. The Extracellular portion of the chain corresponds to 185 to 205; it reads FFWRQAKAEEEVSECLVNTDH. Val201 provides a ligand contact to ergotamine. The helical transmembrane segment at 206–229 threads the bilayer; it reads VLYTVYSTVGAFYLPTLLLIALYG. The Cytoplasmic portion of the chain corresponds to 230 to 315; sequence RIYVEARSRI…AARERKATKT (86 aa). A compositionally biased stretch (polar residues) spans 260–272; it reads SPGSTTSVTSINS. Residues 260–282 form a disordered region; it reads SPGSTTSVTSINSRAPDVPSESG. A helical membrane pass occupies residues 316 to 337; that stretch reads LGIILGVFIVCWLPFFIISLVM. The Extracellular portion of the chain corresponds to 338–347; that stretch reads PICKDACWFH. The chain crosses the membrane as a helical span at residues 348–370; that stretch reads QAIFDFFTWLGYVNSLINPIIYT. Positions 365-369 match the NPxxY motif; important for ligand-induced conformation changes and signaling motif; that stretch reads NPIIY. Residues 371–390 are Cytoplasmic-facing; the sequence is MSNEDFKQAFHKLIRFKCTS. The S-palmitoyl cysteine moiety is linked to residue Cys388.

The protein belongs to the G-protein coupled receptor 1 family. Homodimer. Heterodimer with HTR1D. In terms of processing, phosphorylated. Desensitization of the receptor may be mediated by its phosphorylation. Post-translationally, palmitoylated.

Its subcellular location is the cell membrane. Functionally, G-protein coupled receptor for 5-hydroxytryptamine (serotonin). Also functions as a receptor for ergot alkaloid derivatives, various anxiolytic and antidepressant drugs and other psychoactive substances, such as lysergic acid diethylamide (LSD). Ligand binding causes a conformation change that triggers signaling via guanine nucleotide-binding proteins (G proteins) and modulates the activity of downstream effectors, such as adenylate cyclase. HTR1B is coupled to G(i)/G(o) G alpha proteins and mediates inhibitory neurotransmission by inhibiting adenylate cyclase activity. Arrestin family members inhibit signaling via G proteins and mediate activation of alternative signaling pathways. Regulates the release of 5-hydroxytryptamine, dopamine and acetylcholine in the brain, and thereby affects neural activity, nociceptive processing, pain perception, mood and behavior. Besides, plays a role in vasoconstriction of cerebral arteries. The polypeptide is 5-hydroxytryptamine receptor 1B (HTR1B) (Oryctolagus cuniculus (Rabbit)).